The following is a 193-amino-acid chain: Probable GTP-binding protein EngB (193 aa).

The EngB-type G domain occupies 22-193; it reads ALPEFALAGR…EAWAALERFL (172 aa). Residues 30–37, 57–61, 75–78, 142–145, and 174–176 each bind GTP; these read GRSNVGKS, GKTQT, DVPG, TKAD, and FSA. 2 residues coordinate Mg(2+): serine 37 and threonine 59.

The protein belongs to the TRAFAC class TrmE-Era-EngA-EngB-Septin-like GTPase superfamily. EngB GTPase family. The cofactor is Mg(2+).

Necessary for normal cell division and for the maintenance of normal septation. The polypeptide is Probable GTP-binding protein EngB (Geobacillus sp. (strain WCH70)).